Reading from the N-terminus, the 920-residue chain is Translation initiation factor IF-2 (920 aa).

A disordered region spans residues 33 to 305 (KSASSTVEAP…RGRKSKRAKR (273 aa)). The segment covering 53–86 (SKSAPAPAKSAGNGATAAPATSATPATAAAAAAP) has biased composition (low complexity). Composition is skewed to pro residues over residues 87–159 (APAP…PAPR), 179–193 (PRPQ…PGTP), and 201–212 (NMPPRPAGPRPG). Positions 225–291 (PGGRGPGGGG…GAAGAFGRPG (67 aa)) are enriched in gly residues. Residues 295–304 (KRGRKSKRAK) show a composition bias toward basic residues. A tr-type G domain is found at 416–588 (IRPPVVTVMG…VLLTADASLD (173 aa)). Residues 425-432 (GHVDHGKT) are G1. 425 to 432 (GHVDHGKT) lines the GTP pocket. The G2 stretch occupies residues 450–454 (GITQH). Positions 475 to 478 (DTPG) are G3. GTP is bound by residues 475-479 (DTPGH) and 529-532 (NKID). Residues 529–532 (NKID) form a G4 region. The interval 565-567 (SAK) is G5.

It belongs to the TRAFAC class translation factor GTPase superfamily. Classic translation factor GTPase family. IF-2 subfamily.

The protein resides in the cytoplasm. Its function is as follows. One of the essential components for the initiation of protein synthesis. Protects formylmethionyl-tRNA from spontaneous hydrolysis and promotes its binding to the 30S ribosomal subunits. Also involved in the hydrolysis of GTP during the formation of the 70S ribosomal complex. This Mycobacterium sp. (strain JLS) protein is Translation initiation factor IF-2.